The following is a 212-amino-acid chain: Imidazole glycerol phosphate synthase subunit HisH (212 aa).

In terms of domain architecture, Glutamine amidotransferase type-1 spans 3 to 212 (TVAVIDYGMG…QNFAAWDGRW (210 aa)). Cys81 (nucleophile) is an active-site residue. Catalysis depends on residues His190 and Glu192.

Heterodimer of HisH and HisF.

It localises to the cytoplasm. The enzyme catalyses 5-[(5-phospho-1-deoxy-D-ribulos-1-ylimino)methylamino]-1-(5-phospho-beta-D-ribosyl)imidazole-4-carboxamide + L-glutamine = D-erythro-1-(imidazol-4-yl)glycerol 3-phosphate + 5-amino-1-(5-phospho-beta-D-ribosyl)imidazole-4-carboxamide + L-glutamate + H(+). It catalyses the reaction L-glutamine + H2O = L-glutamate + NH4(+). Its pathway is amino-acid biosynthesis; L-histidine biosynthesis; L-histidine from 5-phospho-alpha-D-ribose 1-diphosphate: step 5/9. Its function is as follows. IGPS catalyzes the conversion of PRFAR and glutamine to IGP, AICAR and glutamate. The HisH subunit catalyzes the hydrolysis of glutamine to glutamate and ammonia as part of the synthesis of IGP and AICAR. The resulting ammonia molecule is channeled to the active site of HisF. The chain is Imidazole glycerol phosphate synthase subunit HisH from Pseudomonas savastanoi pv. phaseolicola (strain 1448A / Race 6) (Pseudomonas syringae pv. phaseolicola (strain 1448A / Race 6)).